The sequence spans 454 residues: Dihydrolipoyllysine-residue succinyltransferase component of 2-oxoglutarate dehydrogenase complex, mitochondrial (454 aa).

Residues 1-68 (MLSRSRCVSR…RFFQTTAVCK (68 aa)) constitute a mitochondrion transit peptide. Residues 71–145 (VITVQTPAFA…EGGTPLFTLR (75 aa)) enclose the Lipoyl-binding domain. A Phosphoserine modification is found at Ser82. Lys111 is modified (N6-lipoyllysine). Positions 147-227 (TGAAPAKAKP…KGLRSEHREK (81 aa)) are disordered. The span at 149–163 (AAPAKAKPAETPAPA) shows a compositional bias: low complexity. Lys155 carries the N6-acetyllysine modification. Residues 186–197 (PPVPSPSQPPSS) show a composition bias toward pro residues. Low complexity predominate over residues 198 to 217 (KPVSAIKPTAAPPLAEAGAA). An N6-acetyllysine mark is found at Lys268, Lys273, Lys274, Lys278, and Lys308. Active-site residues include His425 and Asp429.

The protein belongs to the 2-oxoacid dehydrogenase family. As to quaternary structure, the 2-oxoglutarate dehydrogenase complex is composed of OGDH (2-oxoglutarate dehydrogenase; E1), DLST (dihydrolipoamide succinyltransferase; E2), DLD (dihydrolipoamide dehydrogenase; E3) and the assembly factor KGD4. It contains multiple copies of the three enzymatic components (E1, E2 and E3). In the nucleus, the 2-oxoglutarate dehydrogenase complex associates with KAT2A. Interacts with ABHD11; this interaction maintains the functional lipoylation of the 2-oxoglutarate dehydrogenase complex. The cofactor is (R)-lipoate.

It localises to the mitochondrion matrix. The protein resides in the nucleus. It carries out the reaction N(6)-[(R)-dihydrolipoyl]-L-lysyl-[protein] + succinyl-CoA = N(6)-[(R)-S(8)-succinyldihydrolipoyl]-L-lysyl-[protein] + CoA. It functions in the pathway amino-acid degradation; L-lysine degradation via saccharopine pathway; glutaryl-CoA from L-lysine: step 6/6. Its pathway is carbohydrate metabolism; tricarboxylic acid cycle. Functionally, dihydrolipoamide succinyltransferase (E2) component of the 2-oxoglutarate dehydrogenase complex. The 2-oxoglutarate dehydrogenase complex catalyzes the overall conversion of 2-oxoglutarate to succinyl-CoA and CO(2). The 2-oxoglutarate dehydrogenase complex is mainly active in the mitochondrion. A fraction of the 2-oxoglutarate dehydrogenase complex also localizes in the nucleus and is required for lysine succinylation of histones: associates with KAT2A on chromatin and provides succinyl-CoA to histone succinyltransferase KAT2A. This is Dihydrolipoyllysine-residue succinyltransferase component of 2-oxoglutarate dehydrogenase complex, mitochondrial from Mus musculus (Mouse).